Here is a 436-residue protein sequence, read N- to C-terminus: UDP-N-acetylmuramate--L-alanine ligase (436 aa).

111–117 lines the ATP pocket; the sequence is GTHGKTS.

Belongs to the MurCDEF family.

Its subcellular location is the cytoplasm. It catalyses the reaction UDP-N-acetyl-alpha-D-muramate + L-alanine + ATP = UDP-N-acetyl-alpha-D-muramoyl-L-alanine + ADP + phosphate + H(+). The protein operates within cell wall biogenesis; peptidoglycan biosynthesis. Its function is as follows. Cell wall formation. The sequence is that of UDP-N-acetylmuramate--L-alanine ligase from Pediococcus pentosaceus (strain ATCC 25745 / CCUG 21536 / LMG 10740 / 183-1w).